A 128-amino-acid polypeptide reads, in one-letter code: Large ribosomal subunit protein bL12 (128 aa).

The protein belongs to the bacterial ribosomal protein bL12 family. Homodimer. Part of the ribosomal stalk of the 50S ribosomal subunit. Forms a multimeric L10(L12)X complex, where L10 forms an elongated spine to which 2 to 4 L12 dimers bind in a sequential fashion. Binds GTP-bound translation factors.

Its function is as follows. Forms part of the ribosomal stalk which helps the ribosome interact with GTP-bound translation factors. Is thus essential for accurate translation. The polypeptide is Large ribosomal subunit protein bL12 (Methylobacillus flagellatus (strain ATCC 51484 / DSM 6875 / VKM B-1610 / KT)).